Reading from the N-terminus, the 27-residue chain is Secretin (27 aa).

V27 carries the post-translational modification Valine amide.

The protein belongs to the glucagon family.

Its subcellular location is the secreted. Hormone involved in different processes, such as regulation of the pH of the duodenal content, food intake and water homeostasis. Exerts its biological effects by binding to secretin receptor (SCTR), a G-protein coupled receptor expressed in the basolateral domain of several cells. Acts as a key gastrointestinal hormone by regulating the pH of the duodenal content. Secreted by S cells of the duodenum in the crypts of Lieberkuehn and regulates the pH of the duodenum by (1) inhibiting the secretion of gastric acid from the parietal cells of the stomach and (2) stimulating the production of bicarbonate (NaHCO(3)) from the ductal cells of the pancreas. Production of bicarbonate is essential to neutralize the pH and ensure no damage is done to the small intestine by the gastric acid. In addition to regulating the pH of the duodenal content, plays a central role in diet induced thermogenesis: acts as a non-sympathetic brown fat (BAT) activator mediating prandial thermogenesis, which consequentially induces satiation. Mechanistically, secretin released by the gut after a meal binds to secretin receptor (SCTR) in brown adipocytes, activating brown fat thermogenesis by stimulating lipolysis, which is sensed in the brain and promotes satiation. Also able to stimulate lipolysis in white adipocytes. Also plays an important role in cellular osmoregulation: released into the systemic circulation in response to hyperosmolality and acts at different levels in the hypothalamus, pituitary and kidney to regulate water homeostasis. Also plays a role in the central nervous system, possibly by acting as a neuropeptide hormone: required for hippocampal synaptic function and neural progenitor cells maintenance. The polypeptide is Secretin (Bos taurus (Bovine)).